A 315-amino-acid polypeptide reads, in one-letter code: Alpha- and gamma-adaptin-binding protein p34 (315 aa).

Residues 197 to 234 (IGSADPCHPEQPHLPAADSTESLSDHRGGASNTTDAQV) are disordered. S310 and S311 each carry phosphoserine.

Associated with AP-1 and AP-2 complexes. Widely expressed, including in skin and keratinocytes, with highest levels in adrenal gland, rectum and thymus.

The protein resides in the cytoplasm. Its subcellular location is the cytosol. In terms of biological role, may be involved in endocytic recycling of growth factor receptors such as EGFR. The protein is Alpha- and gamma-adaptin-binding protein p34 (AAGAB) of Homo sapiens (Human).